The following is a 287-amino-acid chain: Hydroxysteroid 11-beta-dehydrogenase 1-like protein (287 aa).

The signal sequence occupies residues 1-15; sequence MKVLLLTGLGALFFA. Residues 36-62, 87-88, and 114-116 each bind NADP(+); these read GVSA…TAHT, DM, and NHL. A substrate-binding site is contributed by Ser165. The active-site Proton acceptor is Tyr178. NADP(+)-binding positions include 178–182 and 211–217; these read YSAAK and GLRDRAS. Asn280 is a glycosylation site (N-linked (GlcNAc...) asparagine).

This sequence belongs to the short-chain dehydrogenases/reductases (SDR) family.

It is found in the secreted. It carries out the reaction cortisone + NADPH + H(+) = cortisol + NADP(+). Its function is as follows. Unidirectional NADP(+)-dependent cortisol dehydrogenase (in vitro). The polypeptide is Hydroxysteroid 11-beta-dehydrogenase 1-like protein (HSD11B1L) (Bos taurus (Bovine)).